Consider the following 256-residue polypeptide: Imidazole glycerol phosphate synthase subunit HisF (256 aa).

Active-site residues include D12 and D131.

Belongs to the HisA/HisF family. Heterodimer of HisH and HisF.

The protein localises to the cytoplasm. The catalysed reaction is 5-[(5-phospho-1-deoxy-D-ribulos-1-ylimino)methylamino]-1-(5-phospho-beta-D-ribosyl)imidazole-4-carboxamide + L-glutamine = D-erythro-1-(imidazol-4-yl)glycerol 3-phosphate + 5-amino-1-(5-phospho-beta-D-ribosyl)imidazole-4-carboxamide + L-glutamate + H(+). The protein operates within amino-acid biosynthesis; L-histidine biosynthesis; L-histidine from 5-phospho-alpha-D-ribose 1-diphosphate: step 5/9. IGPS catalyzes the conversion of PRFAR and glutamine to IGP, AICAR and glutamate. The HisF subunit catalyzes the cyclization activity that produces IGP and AICAR from PRFAR using the ammonia provided by the HisH subunit. This Bifidobacterium adolescentis (strain ATCC 15703 / DSM 20083 / NCTC 11814 / E194a) protein is Imidazole glycerol phosphate synthase subunit HisF.